Consider the following 511-residue polypeptide: 2-isopropylmalate synthase (511 aa).

The Pyruvate carboxyltransferase domain maps to 5-267 (LIVFDTTLRD…DTRIDATQIV (263 aa)). 4 residues coordinate Mn(2+): Asp-14, His-202, His-204, and Asn-238. The segment at 393 to 511 (RLVASRFHSE…SKLERLNPQL (119 aa)) is regulatory domain.

Belongs to the alpha-IPM synthase/homocitrate synthase family. LeuA type 1 subfamily. Homodimer. It depends on Mn(2+) as a cofactor.

Its subcellular location is the cytoplasm. The catalysed reaction is 3-methyl-2-oxobutanoate + acetyl-CoA + H2O = (2S)-2-isopropylmalate + CoA + H(+). It functions in the pathway amino-acid biosynthesis; L-leucine biosynthesis; L-leucine from 3-methyl-2-oxobutanoate: step 1/4. Catalyzes the condensation of the acetyl group of acetyl-CoA with 3-methyl-2-oxobutanoate (2-ketoisovalerate) to form 3-carboxy-3-hydroxy-4-methylpentanoate (2-isopropylmalate). The protein is 2-isopropylmalate synthase of Aromatoleum aromaticum (strain DSM 19018 / LMG 30748 / EbN1) (Azoarcus sp. (strain EbN1)).